A 505-amino-acid chain; its full sequence is Maturase K (505 aa).

Belongs to the intron maturase 2 family. MatK subfamily.

Its subcellular location is the plastid. It is found in the chloroplast. Usually encoded in the trnK tRNA gene intron. Probably assists in splicing its own and other chloroplast group II introns. This is Maturase K from Nuphar variegata (Yellow pond lily).